The sequence spans 271 residues: Shikimate dehydrogenase (NADP(+)) (271 aa).

Residues 19-21 (SLS) and Thr-65 contribute to the shikimate site. The active-site Proton acceptor is Lys-69. Glu-81 provides a ligand contact to NADP(+). Shikimate-binding residues include Asn-90 and Asp-105. NADP(+)-binding positions include 128–132 (GAGGA), 150–155 (NRTIEK), and Ile-211. Residue Tyr-213 coordinates shikimate. Gly-234 contributes to the NADP(+) binding site.

The protein belongs to the shikimate dehydrogenase family. Homodimer.

It catalyses the reaction shikimate + NADP(+) = 3-dehydroshikimate + NADPH + H(+). It participates in metabolic intermediate biosynthesis; chorismate biosynthesis; chorismate from D-erythrose 4-phosphate and phosphoenolpyruvate: step 4/7. Its function is as follows. Involved in the biosynthesis of the chorismate, which leads to the biosynthesis of aromatic amino acids. Catalyzes the reversible NADPH linked reduction of 3-dehydroshikimate (DHSA) to yield shikimate (SA). The polypeptide is Shikimate dehydrogenase (NADP(+)) (Pyrococcus furiosus (strain ATCC 43587 / DSM 3638 / JCM 8422 / Vc1)).